A 689-amino-acid chain; its full sequence is Glycine--tRNA ligase beta subunit (689 aa).

The protein belongs to the class-II aminoacyl-tRNA synthetase family. Tetramer of two alpha and two beta subunits.

The protein resides in the cytoplasm. The enzyme catalyses tRNA(Gly) + glycine + ATP = glycyl-tRNA(Gly) + AMP + diphosphate. The polypeptide is Glycine--tRNA ligase beta subunit (Edwardsiella ictaluri (strain 93-146)).